The following is a 571-amino-acid chain: Proline--tRNA ligase (571 aa).

It belongs to the class-II aminoacyl-tRNA synthetase family. ProS type 1 subfamily. In terms of assembly, homodimer.

The protein resides in the cytoplasm. It carries out the reaction tRNA(Pro) + L-proline + ATP = L-prolyl-tRNA(Pro) + AMP + diphosphate. Catalyzes the attachment of proline to tRNA(Pro) in a two-step reaction: proline is first activated by ATP to form Pro-AMP and then transferred to the acceptor end of tRNA(Pro). As ProRS can inadvertently accommodate and process non-cognate amino acids such as alanine and cysteine, to avoid such errors it has two additional distinct editing activities against alanine. One activity is designated as 'pretransfer' editing and involves the tRNA(Pro)-independent hydrolysis of activated Ala-AMP. The other activity is designated 'posttransfer' editing and involves deacylation of mischarged Ala-tRNA(Pro). The misacylated Cys-tRNA(Pro) is not edited by ProRS. The polypeptide is Proline--tRNA ligase (Shewanella baltica (strain OS185)).